Here is a 114-residue protein sequence, read N- to C-terminus: Ribonuclease P protein component (114 aa).

It belongs to the RnpA family. Consists of a catalytic RNA component (M1 or rnpB) and a protein subunit.

It carries out the reaction Endonucleolytic cleavage of RNA, removing 5'-extranucleotides from tRNA precursor.. Its function is as follows. RNaseP catalyzes the removal of the 5'-leader sequence from pre-tRNA to produce the mature 5'-terminus. It can also cleave other RNA substrates such as 4.5S RNA. The protein component plays an auxiliary but essential role in vivo by binding to the 5'-leader sequence and broadening the substrate specificity of the ribozyme. The polypeptide is Ribonuclease P protein component (Alkaliphilus oremlandii (strain OhILAs) (Clostridium oremlandii (strain OhILAs))).